A 1045-amino-acid polypeptide reads, in one-letter code: Translation initiation factor IF-2 (1045 aa).

2 disordered regions span residues 1-169 (MSDE…AQAP) and 184-451 (QAPA…RGGP). Over residues 83–94 (SGGGGSSAGGLS) the composition is skewed to gly residues. The span at 103–123 (RAIEAAREHQERQAAERRAAE) shows a compositional bias: basic and acidic residues. A compositionally biased stretch (low complexity) spans 124 to 151 (ARAASEAAAARDAAAKSAAAAKAAAAPA). Residues 152 to 163 (PEAPAAPAPTPA) show a composition bias toward pro residues. The segment covering 184-199 (QAPAAPVAAAPAAPRA) has biased composition (low complexity). 2 stretches are compositionally biased toward basic and acidic residues: residues 227–237 (EPSRDRRDDRS) and 302–323 (RNDRPQGDRPQGDRPQGDRPQG). The span at 338–348 (RPAPGARPGPG) shows a compositional bias: pro residues. The span at 352–363 (GARPGVPASAPA) shows a compositional bias: low complexity. Composition is skewed to basic and acidic residues over residues 381 to 393 (VGRKPEEDDDRRK) and 438 to 450 (RAREREKEKRRGG). Positions 540-710 (PRPPVVTVMG…LLLAEVMDLK (171 aa)) constitute a tr-type G domain. Residues 549–556 (GHVDHGKT) are G1. 549–556 (GHVDHGKT) provides a ligand contact to GTP. Positions 574-578 (GITQH) are G2. The interval 596–599 (DTPG) is G3. GTP-binding positions include 596-600 (DTPGH) and 650-653 (NKMD). A G4 region spans residues 650–653 (NKMD). Positions 686-688 (SAK) are G5.

Belongs to the TRAFAC class translation factor GTPase superfamily. Classic translation factor GTPase family. IF-2 subfamily.

It localises to the cytoplasm. Its function is as follows. One of the essential components for the initiation of protein synthesis. Protects formylmethionyl-tRNA from spontaneous hydrolysis and promotes its binding to the 30S ribosomal subunits. Also involved in the hydrolysis of GTP during the formation of the 70S ribosomal complex. This Caulobacter sp. (strain K31) protein is Translation initiation factor IF-2.